The following is a 309-amino-acid chain: D-alanine--D-alanine ligase (309 aa).

In terms of domain architecture, ATP-grasp spans 109-304 (KMVWAACGLP…FTALCLAILE (196 aa)). Residue 135–190 (VAELGLPIFVKPVHEGSSMGATKVTAASQLKAAWERAARFDDLVLAEEFIVGAELT) participates in ATP binding. 3 residues coordinate Mg(2+): Asp258, Glu271, and Asn273.

This sequence belongs to the D-alanine--D-alanine ligase family. Mg(2+) is required as a cofactor. Mn(2+) serves as cofactor.

Its subcellular location is the cytoplasm. It catalyses the reaction 2 D-alanine + ATP = D-alanyl-D-alanine + ADP + phosphate + H(+). The protein operates within cell wall biogenesis; peptidoglycan biosynthesis. Cell wall formation. This Aromatoleum aromaticum (strain DSM 19018 / LMG 30748 / EbN1) (Azoarcus sp. (strain EbN1)) protein is D-alanine--D-alanine ligase.